Reading from the N-terminus, the 531-residue chain is Pescadillo homolog (531 aa).

Positions 309 to 398 (SIKTMFKGCV…RKLPTERYMP (90 aa)) constitute a BRCT domain.

This sequence belongs to the pescadillo family.

Its subcellular location is the nucleus. It is found in the nucleolus. The protein resides in the nucleoplasm. Its function is as follows. Required for maturation of ribosomal RNAs and formation of the large ribosomal subunit. The protein is Pescadillo homolog of Caenorhabditis elegans.